The primary structure comprises 366 residues: Cobalt-precorrin-5B C(1)-methyltransferase (366 aa).

It belongs to the CbiD family.

It catalyses the reaction Co-precorrin-5B + S-adenosyl-L-methionine = Co-precorrin-6A + S-adenosyl-L-homocysteine. It participates in cofactor biosynthesis; adenosylcobalamin biosynthesis; cob(II)yrinate a,c-diamide from sirohydrochlorin (anaerobic route): step 6/10. Its function is as follows. Catalyzes the methylation of C-1 in cobalt-precorrin-5B to form cobalt-precorrin-6A. This is Cobalt-precorrin-5B C(1)-methyltransferase from Thermoanaerobacter sp. (strain X514).